Reading from the N-terminus, the 246-residue chain is Eukaryotic translation initiation factor 6 (246 aa).

A phosphoserine; by CK1 mark is found at serine 174 and serine 175.

Belongs to the eIF-6 family. Monomer. Associates with the 60S ribosomal subunit. Post-translationally, phosphorylation at Ser-174 and Ser-175 promotes nuclear export.

It is found in the cytoplasm. The protein localises to the nucleus. Its subcellular location is the nucleolus. Its function is as follows. Binds to the 60S ribosomal subunit and prevents its association with the 40S ribosomal subunit to form the 80S initiation complex in the cytoplasm. Is also involved in ribosome biogenesis. Associates with pre-60S subunits in the nucleus and is involved in its nuclear export. This chain is Eukaryotic translation initiation factor 6 (tif-6), found in Neurospora crassa (strain ATCC 24698 / 74-OR23-1A / CBS 708.71 / DSM 1257 / FGSC 987).